The following is a 487-amino-acid chain: Aspyridones efflux protein apdF (487 aa).

A compositionally biased stretch (basic and acidic residues) spans 1-21; that stretch reads MSSVRESSKDESIVHPPKAPE. Positions 1–25 are disordered; sequence MSSVRESSKDESIVHPPKAPESEPF. The helical transmembrane segment at 35–55 threads the bilayer; the sequence is VALGAGGVLFCTFGYVNAFGV. N-linked (GlcNAc...) asparagine glycosylation is present at Asn67. The next 8 membrane-spanning stretches (helical) occupy residues 75–95, 99–119, 126–146, 159–179, 191–211, 234–254, 262–282, and 293–313; these read WIGS…GPLF, GAKV…MTSL, FFLA…APAL, AAMG…PIAL, WAVR…VLGI, VATL…FFYL, GMST…SFFG, and IGPY…TFCW. Residue Asn319 is glycosylated (N-linked (GlcNAc...) asparagine). 3 helical membrane passes run 322–342, 354–374, and 385–405; these read IIVF…ITPA, IGTY…IGPP, and GFLQ…VLAF.

The protein belongs to the major facilitator superfamily. Monocarboxylate porter (TC 2.A.1.13) family.

The protein resides in the cell membrane. Its function is as follows. Efflux pump that may be involved in the secretion of aspyridones. The protein is Aspyridones efflux protein apdF of Emericella nidulans (strain FGSC A4 / ATCC 38163 / CBS 112.46 / NRRL 194 / M139) (Aspergillus nidulans).